We begin with the raw amino-acid sequence, 354 residues long: Uroporphyrinogen decarboxylase (354 aa).

Substrate-binding positions include 27 to 31 (RQAGR), Asp77, Tyr154, Thr209, and His327.

This sequence belongs to the uroporphyrinogen decarboxylase family. In terms of assembly, homodimer.

The protein localises to the cytoplasm. The enzyme catalyses uroporphyrinogen III + 4 H(+) = coproporphyrinogen III + 4 CO2. It functions in the pathway porphyrin-containing compound metabolism; protoporphyrin-IX biosynthesis; coproporphyrinogen-III from 5-aminolevulinate: step 4/4. Functionally, catalyzes the decarboxylation of four acetate groups of uroporphyrinogen-III to yield coproporphyrinogen-III. In Salmonella newport (strain SL254), this protein is Uroporphyrinogen decarboxylase.